Consider the following 509-residue polypeptide: Maturase K (509 aa).

It belongs to the intron maturase 2 family. MatK subfamily.

Its subcellular location is the plastid. It is found in the chloroplast. Usually encoded in the trnK tRNA gene intron. Probably assists in splicing its own and other chloroplast group II introns. The polypeptide is Maturase K (Dalea purpurea (Violet prairie clover)).